We begin with the raw amino-acid sequence, 506 residues long: Protein EFFECTOR OF TRANSCRIPTION 1 (506 aa).

The 41-residue stretch at 185–225 (AFQGLYELSHDHGRKDDVLVANLGQPESIRSRLRSYSRSFA) folds into the GIY-YIG domain. Over residues 234–247 (LSQTILPTTQNKSD) the composition is skewed to polar residues. Residues 234–298 (LSQTILPTTQ…VSEKHDDIVD (65 aa)) form a disordered region. Over residues 248-272 (NQTEEKKSDSEEEREVSSDAAEKES) the composition is skewed to basic and acidic residues. Residues 273-288 (NSLPSILRLSRSRPQP) are compositionally biased toward low complexity. 2 Cx9Cx9RCx2HK repeats span residues 306–331 (CGVLLEDGTTCTTTPVKGRKRCTEHK) and 361–386 (CGVILPDMIRCRSKPVSRRKRCEDHK). A compositionally biased stretch (basic and acidic residues) spans 404-413 (KAVNEDKSKP). The tract at residues 404 to 426 (KAVNEDKSKPETSTGMNQEGSGL) is disordered. The span at 414–423 (ETSTGMNQEG) shows a compositional bias: polar residues. 2 Cx9Cx9RCx2HK repeats span residues 428 to 453 (CEATTKNGLPCTRSAPEGSKRCWQHK) and 475 to 500 (CGFKLYNGSVCEKSPVKGRKRCEEHK).

In terms of tissue distribution, expressed in rosette leaves, stipules, stems, flowers, siliques and mature seeds. Expressed in the vascular bundles of xylem in shoot parenchyma cells. Expressed in the remnant cytoplasm of differentiated fiber cells and in protoxylem element of parenchymal cells.

The protein resides in the cytoplasm. It is found in the nucleus. Functionally, transcriptional regulator involved in the regulation of cell differentiation in meristems. Binds DNA without sequence preference. The sequence is that of Protein EFFECTOR OF TRANSCRIPTION 1 from Arabidopsis thaliana (Mouse-ear cress).